Consider the following 248-residue polypeptide: MYKLVLIRHGESTWNKENRFTGWVDVDLTEQGRNEAYQAGELLKEAGYTFDIAYTSVLKRAIRTLWHVQDRMDLMYLPVVHSWRLNERHYGALSGLNKAETAAKFGDDQVLVWRRSYDTPPPALEPTDERAPFNDPRYAKVPREQLPLTECLKDTVARVLPLWNESIAPAVRSGKQVLIAAHGNSLRALIKYLDGISDSDIVGLNIPNGVPLVYELDEDLKPIQHYYLGDQDAIAKAQAAVAKQGKAG.

Substrate contacts are provided by residues 8–15, 21–22, Arg-60, 87–90, Lys-98, 114–115, and 183–184; these read RHGESTWN, TG, ERHY, RR, and GN. His-9 serves as the catalytic Tele-phosphohistidine intermediate. Catalysis depends on Glu-87, which acts as the Proton donor/acceptor.

The protein belongs to the phosphoglycerate mutase family. BPG-dependent PGAM subfamily. In terms of assembly, homodimer.

It carries out the reaction (2R)-2-phosphoglycerate = (2R)-3-phosphoglycerate. It functions in the pathway carbohydrate degradation; glycolysis; pyruvate from D-glyceraldehyde 3-phosphate: step 3/5. Its function is as follows. Catalyzes the interconversion of 2-phosphoglycerate and 3-phosphoglycerate. This chain is 2,3-bisphosphoglycerate-dependent phosphoglycerate mutase, found in Burkholderia ambifaria (strain ATCC BAA-244 / DSM 16087 / CCUG 44356 / LMG 19182 / AMMD) (Burkholderia cepacia (strain AMMD)).